We begin with the raw amino-acid sequence, 348 residues long: Histidinol-phosphate aminotransferase (348 aa).

Lys-211 carries the N6-(pyridoxal phosphate)lysine modification.

The protein belongs to the class-II pyridoxal-phosphate-dependent aminotransferase family. Histidinol-phosphate aminotransferase subfamily. Homodimer. Requires pyridoxal 5'-phosphate as cofactor.

It catalyses the reaction L-histidinol phosphate + 2-oxoglutarate = 3-(imidazol-4-yl)-2-oxopropyl phosphate + L-glutamate. It participates in amino-acid biosynthesis; L-histidine biosynthesis; L-histidine from 5-phospho-alpha-D-ribose 1-diphosphate: step 7/9. The polypeptide is Histidinol-phosphate aminotransferase (Chlorobaculum tepidum (strain ATCC 49652 / DSM 12025 / NBRC 103806 / TLS) (Chlorobium tepidum)).